The sequence spans 488 residues: Protein nucleotidyltransferase YdiU (488 aa).

Positions 91, 93, 94, 114, 126, 127, 177, and 184 each coordinate ATP. Positions Arg108–Gly127 are disordered. Asp253 functions as the Proton acceptor in the catalytic mechanism. Mg(2+) is bound by residues Asn254 and Asp263. Asp263 is a binding site for ATP.

It belongs to the SELO family. Mg(2+) is required as a cofactor. Mn(2+) serves as cofactor.

It carries out the reaction L-seryl-[protein] + ATP = 3-O-(5'-adenylyl)-L-seryl-[protein] + diphosphate. The catalysed reaction is L-threonyl-[protein] + ATP = 3-O-(5'-adenylyl)-L-threonyl-[protein] + diphosphate. The enzyme catalyses L-tyrosyl-[protein] + ATP = O-(5'-adenylyl)-L-tyrosyl-[protein] + diphosphate. It catalyses the reaction L-histidyl-[protein] + UTP = N(tele)-(5'-uridylyl)-L-histidyl-[protein] + diphosphate. It carries out the reaction L-seryl-[protein] + UTP = O-(5'-uridylyl)-L-seryl-[protein] + diphosphate. The catalysed reaction is L-tyrosyl-[protein] + UTP = O-(5'-uridylyl)-L-tyrosyl-[protein] + diphosphate. In terms of biological role, nucleotidyltransferase involved in the post-translational modification of proteins. It can catalyze the addition of adenosine monophosphate (AMP) or uridine monophosphate (UMP) to a protein, resulting in modifications known as AMPylation and UMPylation. The sequence is that of Protein nucleotidyltransferase YdiU from Bacillus anthracis (strain A0248).